We begin with the raw amino-acid sequence, 288 residues long: Bifunctional protein FolD (288 aa).

Residues 163 to 165 (GRS), Ser188, and Ile229 contribute to the NADP(+) site.

The protein belongs to the tetrahydrofolate dehydrogenase/cyclohydrolase family. Homodimer.

It catalyses the reaction (6R)-5,10-methylene-5,6,7,8-tetrahydrofolate + NADP(+) = (6R)-5,10-methenyltetrahydrofolate + NADPH. The enzyme catalyses (6R)-5,10-methenyltetrahydrofolate + H2O = (6R)-10-formyltetrahydrofolate + H(+). The protein operates within one-carbon metabolism; tetrahydrofolate interconversion. Its function is as follows. Catalyzes the oxidation of 5,10-methylenetetrahydrofolate to 5,10-methenyltetrahydrofolate and then the hydrolysis of 5,10-methenyltetrahydrofolate to 10-formyltetrahydrofolate. This is Bifunctional protein FolD from Campylobacter curvus (strain 525.92).